The sequence spans 275 residues: MSNLQAIIEAAFEKRAEITPKTVDAETRAAIEEVIEGLDSGKYRVAEKIAGEWVTHQWLKKAVLLSFRINDNQIIDGAETKYYDKVALKFADYTEERFTEEGFRVVPSATVRKGAYISKNCVLMPSYVNIGAYVGEGTMVDTWATVGSCAQIGKNVHLSGGVGIGGVLEPLQANPTIIGDNCFIGARSEVVEGVIVEDGCVISMGVFIGQSTKIYDRETGEIHYGRVPAGSVVVSGSLPSKCGKYSLYCAVIVKKVDAKTLGKVGINELLRSIEE.

Positions 104 and 141 each coordinate substrate.

Belongs to the transferase hexapeptide repeat family. Homotrimer.

Its subcellular location is the cytoplasm. It carries out the reaction (S)-2,3,4,5-tetrahydrodipicolinate + succinyl-CoA + H2O = (S)-2-succinylamino-6-oxoheptanedioate + CoA. It participates in amino-acid biosynthesis; L-lysine biosynthesis via DAP pathway; LL-2,6-diaminopimelate from (S)-tetrahydrodipicolinate (succinylase route): step 1/3. In Haemophilus influenzae (strain PittEE), this protein is 2,3,4,5-tetrahydropyridine-2,6-dicarboxylate N-succinyltransferase.